The primary structure comprises 140 residues: Small ribosomal subunit protein uS11c (140 aa).

Belongs to the universal ribosomal protein uS11 family. As to quaternary structure, part of the 30S ribosomal subunit.

It localises to the plastid. The protein localises to the chloroplast. This is Small ribosomal subunit protein uS11c from Pelargonium hortorum (Common geranium).